The chain runs to 217 residues: tRNA (guanine-N(7)-)-methyltransferase (217 aa).

The S-adenosyl-L-methionine site is built by glutamate 45, glutamate 70, aspartate 97, and aspartate 119. Aspartate 119 is an active-site residue. Lysine 123 lines the substrate pocket. The interaction with RNA stretch occupies residues 125–130 (RHEKRR). Residues aspartate 155 and 195–198 (TEYE) each bind substrate.

This sequence belongs to the class I-like SAM-binding methyltransferase superfamily. TrmB family.

The enzyme catalyses guanosine(46) in tRNA + S-adenosyl-L-methionine = N(7)-methylguanosine(46) in tRNA + S-adenosyl-L-homocysteine. Its pathway is tRNA modification; N(7)-methylguanine-tRNA biosynthesis. In terms of biological role, catalyzes the formation of N(7)-methylguanine at position 46 (m7G46) in tRNA. The sequence is that of tRNA (guanine-N(7)-)-methyltransferase from Lactobacillus helveticus (strain DPC 4571).